The sequence spans 626 residues: Chaperone protein DnaK (626 aa).

Residue Thr175 is modified to Phosphothreonine; by autocatalysis. Residues 586-606 are compositionally biased toward low complexity; that stretch reads GAEGAAAGADGAGASAGSASG. Residues 586 to 626 form a disordered region; that stretch reads GAEGAAAGADGAGASAGSASGSDDDTVEAEVVDDDDDKDNK. Residues 607 to 626 are compositionally biased toward acidic residues; the sequence is SDDDTVEAEVVDDDDDKDNK.

It belongs to the heat shock protein 70 family.

Its function is as follows. Acts as a chaperone. This is Chaperone protein DnaK from Bifidobacterium longum (strain DJO10A).